The following is a 1116-amino-acid chain: Ubiquitin C-terminal hydrolase 12 (1116 aa).

A compositionally biased stretch (pro residues) spans 1 to 10; that stretch reads MTMMTPPPVD. The tract at residues 1–52 is disordered; it reads MTMMTPPPVDQPEDEEMLVPNSDLVDGPAQPMEVTQPETAASTVENQPAEDP. Polar residues predominate over residues 36-46; that stretch reads QPETAASTVEN. Positions 54 to 179 constitute an MATH domain; the sequence is TLKFTWTIPN…NDTVLVEAEV (126 aa). Residues 199-524 enclose the USP domain; that stretch reads VGLKNQGATC…NAYMLVYIRE (326 aa). Residue C208 is the Nucleophile of the active site. H455 serves as the catalytic Proton acceptor.

It belongs to the peptidase C19 family. As to quaternary structure, interacts with SIC/RON3.

It catalyses the reaction Thiol-dependent hydrolysis of ester, thioester, amide, peptide and isopeptide bonds formed by the C-terminal Gly of ubiquitin (a 76-residue protein attached to proteins as an intracellular targeting signal).. Its function is as follows. Recognizes and hydrolyzes the peptide bond at the C-terminal Gly of ubiquitin. Involved in the processing of poly-ubiquitin precursors as well as that of ubiquitinated proteins. Positive regulator of root meristem development that, together with UBP13, prevents the ubiquitination and turnover of RGFR1 induced by the RGF1 hormone peptide, thus influencing PLT1 and PLT2 expression. This is Ubiquitin C-terminal hydrolase 12 from Arabidopsis thaliana (Mouse-ear cress).